Here is a 278-residue protein sequence, read N- to C-terminus: Envelope glycoprotein L (278 aa).

A signal peptide spans 1–30; that stretch reads MCRRPDCGFSFSPGPVILLWCCLLLPIVSS. The gL betaherpesvirus-type domain occupies 43-256; that stretch reads VPAECPELTR…DKYYAGLPPE (214 aa). A disulfide bridge links Cys-154 with Cys-159.

It belongs to the herpesviridae glycoprotein L (gL) family. Betaherpesvirinae gL subfamily. Interacts with glycoprotein H (gH); this interaction is necessary for the correct processing and cell surface expression of gH. Forms the envelope pentamer complex (PC) composed of gH, gL, UL128, UL130, and UL131A. The pentamer interacts with host NRP2. Forms the envelope trimer complex composed of gH, gL, and gO. The trimer interacts with host PDGFRA.

It is found in the virion membrane. The protein resides in the host cell membrane. It localises to the host Golgi apparatus. Its subcellular location is the host trans-Golgi network. Its function is as follows. The heterodimer glycoprotein H-glycoprotein L is required for the fusion of viral and plasma membranes leading to virus entry into the host cell. Acts as a functional inhibitor of gH and maintains gH in an inhibited form. Upon binding to host integrins, gL dissociates from gH leading to activation of the viral fusion glycoproteins gB and gH. In human cytomegalovirus, forms two distincts complexes to mediate viral entry, a trimer and a pentamer at the surface of the virion envelope. The gH-gL-gO trimer is required for infection in fibroblasts by interacting with host PDGFRA. The gH-gL-UL128-UL130-UL131A pentamer is essential for viral entry in epithelial, endothelial and myeloid cells via interaction with host NRP2. This chain is Envelope glycoprotein L, found in Human cytomegalovirus (strain PT) (HHV-5).